The following is a 484-amino-acid chain: Acid alpha-amylase (484 aa).

Residue Asn-24 is glycosylated (N-linked (GlcNAc...) asparagine). Cys-30 and Cys-38 are disulfide-bonded. Substrate is bound at residue Trp-83. Ca(2+) is bound at residue Asp-121. Substrate is bound at residue His-122. A disulfide bond links Cys-150 and Cys-164. Asn-157 carries N-linked (GlcNAc...) asparagine glycosylation. Residues Glu-162 and Asp-175 each contribute to the Ca(2+) site. The N-linked (GlcNAc...) asparagine glycan is linked to Asn-197. A substrate-binding site is contributed by Arg-204. Ca(2+) is bound by residues Asp-206, Glu-210, and Glu-230. Asp-206 (nucleophile) is an active-site residue. 209-210 lines the substrate pocket; it reads LE. Glu-230 (proton donor) is an active-site residue. A substrate-binding site is contributed by Gly-234. Cys-240 and Cys-283 are joined by a disulfide. Substrate is bound by residues Asp-297 and Arg-344. A disulfide bond links Cys-440 and Cys-475.

This sequence belongs to the glycosyl hydrolase 13 family. Monomer. Ca(2+) serves as cofactor.

The protein localises to the secreted. The enzyme catalyses Endohydrolysis of (1-&gt;4)-alpha-D-glucosidic linkages in polysaccharides containing three or more (1-&gt;4)-alpha-linked D-glucose units.. This Aspergillus niger protein is Acid alpha-amylase.